Here is a 327-residue protein sequence, read N- to C-terminus: MSLNEPIKKVSIVIPVYNEQESLPALIDRTTAACKLLTQAYEIILVDDGSSDNSTELLTAAANDPDSHIIAILLNRNYGQHSAIMAGFNQVSGDLIITLDADLQNPPEEIPRLVHVAEEGYDVVGTVRANRQDSLFRKTASRMINMMIQRATGKSMGDYGCMLRAYRRHIVEAMLHCHERSTFIPILANTFARRTTEITVHHAEREFGNSKYSLMRLINLMYDLITCLTTTPLRLLSLVGSAIALLGFTFSVLLVALRLIFGPEWAGGGVFTLFAVLFMFIGAQFVGMGLLGEYIGRIYNDVRARPRYFVQKVVGAEQTENNQDVEK.

The next 2 helical transmembrane spans lie at 235-255 and 270-290; these read LLSL…VLLV and VFTL…GMGL.

It belongs to the glycosyltransferase 2 family.

Its subcellular location is the cell inner membrane. The catalysed reaction is UDP-4-deoxy-4-formamido-beta-L-arabinose + di-trans,octa-cis-undecaprenyl phosphate = 4-deoxy-4-formamido-alpha-L-arabinopyranosyl di-trans,octa-cis-undecaprenyl phosphate + UDP. It participates in glycolipid biosynthesis; 4-amino-4-deoxy-alpha-L-arabinose undecaprenyl phosphate biosynthesis; 4-amino-4-deoxy-alpha-L-arabinose undecaprenyl phosphate from UDP-4-deoxy-4-formamido-beta-L-arabinose and undecaprenyl phosphate: step 1/2. It functions in the pathway bacterial outer membrane biogenesis; lipopolysaccharide biosynthesis. Its function is as follows. Catalyzes the transfer of 4-deoxy-4-formamido-L-arabinose from UDP to undecaprenyl phosphate. The modified arabinose is attached to lipid A and is required for resistance to polymyxin and cationic antimicrobial peptides. In Yersinia pseudotuberculosis serotype IB (strain PB1/+), this protein is Undecaprenyl-phosphate 4-deoxy-4-formamido-L-arabinose transferase.